Here is a 134-residue protein sequence, read N- to C-terminus: Small ribosomal subunit protein uS8 (134 aa).

Belongs to the universal ribosomal protein uS8 family. Part of the 30S ribosomal subunit. Contacts proteins S5 and S12.

Functionally, one of the primary rRNA binding proteins, it binds directly to 16S rRNA central domain where it helps coordinate assembly of the platform of the 30S subunit. The polypeptide is Small ribosomal subunit protein uS8 (Petrotoga mobilis (strain DSM 10674 / SJ95)).